The following is a 222-amino-acid chain: Sugar fermentation stimulation protein homolog (222 aa).

This sequence belongs to the SfsA family.

This chain is Sugar fermentation stimulation protein homolog, found in Thermoplasma acidophilum (strain ATCC 25905 / DSM 1728 / JCM 9062 / NBRC 15155 / AMRC-C165).